Here is a 245-residue protein sequence, read N- to C-terminus: 1-(5-phosphoribosyl)-5-[(5-phosphoribosylamino)methylideneamino] imidazole-4-carboxamide isomerase (245 aa).

Aspartate 7 serves as the catalytic Proton acceptor. Aspartate 129 functions as the Proton donor in the catalytic mechanism.

The protein belongs to the HisA/HisF family.

Its subcellular location is the cytoplasm. It catalyses the reaction 1-(5-phospho-beta-D-ribosyl)-5-[(5-phospho-beta-D-ribosylamino)methylideneamino]imidazole-4-carboxamide = 5-[(5-phospho-1-deoxy-D-ribulos-1-ylimino)methylamino]-1-(5-phospho-beta-D-ribosyl)imidazole-4-carboxamide. Its pathway is amino-acid biosynthesis; L-histidine biosynthesis; L-histidine from 5-phospho-alpha-D-ribose 1-diphosphate: step 4/9. The chain is 1-(5-phosphoribosyl)-5-[(5-phosphoribosylamino)methylideneamino] imidazole-4-carboxamide isomerase from Escherichia coli O9:H4 (strain HS).